Reading from the N-terminus, the 62-residue chain is Large ribosomal subunit protein eL37 (62 aa).

Residues Cys-20, Cys-23, Cys-35, and Cys-38 each contribute to the Zn(2+) site. The segment at 20-38 (CRRCGRHAFNVAKGYCAAC) adopts a C4-type zinc-finger fold.

Belongs to the eukaryotic ribosomal protein eL37 family. The cofactor is Zn(2+).

Functionally, binds to the 23S rRNA. The chain is Large ribosomal subunit protein eL37 from Staphylothermus marinus (strain ATCC 43588 / DSM 3639 / JCM 9404 / F1).